The chain runs to 282 residues: Nucleotide-binding protein ABO_0549 (282 aa).

8–15 (GRSGSGKT) serves as a coordination point for ATP. GTP is bound at residue 59 to 62 (DARN).

This sequence belongs to the RapZ-like family.

Displays ATPase and GTPase activities. The polypeptide is Nucleotide-binding protein ABO_0549 (Alcanivorax borkumensis (strain ATCC 700651 / DSM 11573 / NCIMB 13689 / SK2)).